The following is a 289-amino-acid chain: MITGKTKLLGVIGHPVEHSLSPVMHNAAIAQLGLDYVYLPFPIAPDNLEAAIALLATIGVVGFSVTIPHKQAIIPLLAEISPVAQAIGAVNTVTRQNNQWVGTNTDIEGFIAPLQTTYKRDWSQQIAVILGNGGAARAVVAGCYQLGFAEIHVVGRNVQRLEEFRHSWDNSPIAENLQVHTWDYLAKLVPQANLLVNTTPIGMYPQVDESPLSTEELANLQTGAIAYDLIYIPKPTQFLQKAQQQGAIAIDGLEMLVQQGVAALKIWLQQDDIPVDVMRQALQKHLGLV.

Residues 19-21 (SLS) and T66 contribute to the shikimate site. K70 (proton acceptor) is an active-site residue. Residues N91 and D106 each contribute to the shikimate site. NADP(+) contacts are provided by residues 131–135 (GNGGA) and L229. Position 231 (Y231) interacts with shikimate. Position 252 (G252) interacts with NADP(+).

This sequence belongs to the shikimate dehydrogenase family. Homodimer.

The catalysed reaction is shikimate + NADP(+) = 3-dehydroshikimate + NADPH + H(+). It participates in metabolic intermediate biosynthesis; chorismate biosynthesis; chorismate from D-erythrose 4-phosphate and phosphoenolpyruvate: step 4/7. In terms of biological role, involved in the biosynthesis of the chorismate, which leads to the biosynthesis of aromatic amino acids. Catalyzes the reversible NADPH linked reduction of 3-dehydroshikimate (DHSA) to yield shikimate (SA). The chain is Shikimate dehydrogenase (NADP(+)) from Trichormus variabilis (strain ATCC 29413 / PCC 7937) (Anabaena variabilis).